Consider the following 392-residue polypeptide: Imidazolonepropionase (392 aa).

Residues histidine 69 and histidine 71 each contribute to the Fe(3+) site. Zn(2+) is bound by residues histidine 69 and histidine 71. Positions 78, 136, and 163 each coordinate 4-imidazolone-5-propanoate. An N-formimidoyl-L-glutamate-binding site is contributed by tyrosine 136. Histidine 226 lines the Fe(3+) pocket. Histidine 226 provides a ligand contact to Zn(2+). Glutamine 229 contacts 4-imidazolone-5-propanoate. Residue aspartate 302 coordinates Fe(3+). Aspartate 302 contacts Zn(2+). The N-formimidoyl-L-glutamate site is built by asparagine 304 and glycine 306. Serine 307 contacts 4-imidazolone-5-propanoate.

The protein belongs to the metallo-dependent hydrolases superfamily. HutI family. Requires Zn(2+) as cofactor. Fe(3+) is required as a cofactor.

Its subcellular location is the cytoplasm. The catalysed reaction is 4-imidazolone-5-propanoate + H2O = N-formimidoyl-L-glutamate. Its pathway is amino-acid degradation; L-histidine degradation into L-glutamate; N-formimidoyl-L-glutamate from L-histidine: step 3/3. In terms of biological role, catalyzes the hydrolytic cleavage of the carbon-nitrogen bond in imidazolone-5-propanoate to yield N-formimidoyl-L-glutamate. It is the third step in the universal histidine degradation pathway. The protein is Imidazolonepropionase of Salinispora arenicola (strain CNS-205).